The chain runs to 157 residues: SsrA-binding protein (157 aa).

A disordered region spans residues 130–157 (KAEHDKRDTIKEREGKREVERVMKSRHR).

It belongs to the SmpB family.

The protein resides in the cytoplasm. Required for rescue of stalled ribosomes mediated by trans-translation. Binds to transfer-messenger RNA (tmRNA), required for stable association of tmRNA with ribosomes. tmRNA and SmpB together mimic tRNA shape, replacing the anticodon stem-loop with SmpB. tmRNA is encoded by the ssrA gene; the 2 termini fold to resemble tRNA(Ala) and it encodes a 'tag peptide', a short internal open reading frame. During trans-translation Ala-aminoacylated tmRNA acts like a tRNA, entering the A-site of stalled ribosomes, displacing the stalled mRNA. The ribosome then switches to translate the ORF on the tmRNA; the nascent peptide is terminated with the 'tag peptide' encoded by the tmRNA and targeted for degradation. The ribosome is freed to recommence translation, which seems to be the essential function of trans-translation. This chain is SsrA-binding protein, found in Acidovorax sp. (strain JS42).